The primary structure comprises 1132 residues: DNA-directed RNA polymerase subunit beta (1132 aa).

This sequence belongs to the RNA polymerase beta chain family. In terms of assembly, the RNAP catalytic core consists of 2 alpha, 1 beta, 1 beta' and 1 omega subunit. When a sigma factor is associated with the core the holoenzyme is formed, which can initiate transcription.

The enzyme catalyses RNA(n) + a ribonucleoside 5'-triphosphate = RNA(n+1) + diphosphate. DNA-dependent RNA polymerase catalyzes the transcription of DNA into RNA using the four ribonucleoside triphosphates as substrates. This is DNA-directed RNA polymerase subunit beta from Carboxydothermus hydrogenoformans (strain ATCC BAA-161 / DSM 6008 / Z-2901).